A 270-amino-acid chain; its full sequence is UPF0354 protein BcerKBAB4_4524 (270 aa).

Belongs to the UPF0354 family.

The sequence is that of UPF0354 protein BcerKBAB4_4524 from Bacillus mycoides (strain KBAB4) (Bacillus weihenstephanensis).